We begin with the raw amino-acid sequence, 401 residues long: 1-deoxy-D-xylulose 5-phosphate reductoisomerase (401 aa).

Residues Thr11, Gly12, Ser13, Ile14, Arg38, Asn39, and Asn125 each coordinate NADPH. Lys126 contributes to the 1-deoxy-D-xylulose 5-phosphate binding site. Glu127 contributes to the NADPH binding site. Asp151 contributes to the Mn(2+) binding site. Residues Ser152, Glu153, Ser179, and His202 each coordinate 1-deoxy-D-xylulose 5-phosphate. A Mn(2+)-binding site is contributed by Glu153. Residue Gly208 participates in NADPH binding. Positions 215, 220, 221, and 224 each coordinate 1-deoxy-D-xylulose 5-phosphate. Glu224 is a Mn(2+) binding site.

The protein belongs to the DXR family. Mg(2+) serves as cofactor. Requires Mn(2+) as cofactor.

It catalyses the reaction 2-C-methyl-D-erythritol 4-phosphate + NADP(+) = 1-deoxy-D-xylulose 5-phosphate + NADPH + H(+). The protein operates within isoprenoid biosynthesis; isopentenyl diphosphate biosynthesis via DXP pathway; isopentenyl diphosphate from 1-deoxy-D-xylulose 5-phosphate: step 1/6. Catalyzes the NADPH-dependent rearrangement and reduction of 1-deoxy-D-xylulose-5-phosphate (DXP) to 2-C-methyl-D-erythritol 4-phosphate (MEP). In Paraburkholderia phymatum (strain DSM 17167 / CIP 108236 / LMG 21445 / STM815) (Burkholderia phymatum), this protein is 1-deoxy-D-xylulose 5-phosphate reductoisomerase.